The sequence spans 239 residues: 1-(5-phosphoribosyl)-5-[(5-phosphoribosylamino)methylideneamino] imidazole-4-carboxamide isomerase (239 aa).

The active-site Proton acceptor is D8. The Proton donor role is filled by D129.

It belongs to the HisA/HisF family.

It is found in the cytoplasm. The enzyme catalyses 1-(5-phospho-beta-D-ribosyl)-5-[(5-phospho-beta-D-ribosylamino)methylideneamino]imidazole-4-carboxamide = 5-[(5-phospho-1-deoxy-D-ribulos-1-ylimino)methylamino]-1-(5-phospho-beta-D-ribosyl)imidazole-4-carboxamide. It functions in the pathway amino-acid biosynthesis; L-histidine biosynthesis; L-histidine from 5-phospho-alpha-D-ribose 1-diphosphate: step 4/9. The polypeptide is 1-(5-phosphoribosyl)-5-[(5-phosphoribosylamino)methylideneamino] imidazole-4-carboxamide isomerase (Bacillus mycoides (strain KBAB4) (Bacillus weihenstephanensis)).